The chain runs to 216 residues: Nucleolar protein 12 (216 aa).

Residues G33–Q97 adopt a coiled-coil conformation. Residues L120–E216 form a disordered region. Over residues G129–S140 the composition is skewed to acidic residues. 2 stretches are compositionally biased toward basic residues: residues A171–R183 and K200–E216.

It belongs to the RRP17 family. Interacts with KIAA1191.

The protein localises to the nucleus. It localises to the nucleolus. Its subcellular location is the cytoplasm. Multifunctional RNA binding protein that plays a role in RNA metabolism and DNA maintenance. Participates in the resolution of DNA stress and the maintenance of genome integrity by localizing to sites of DNA insults. Also plays a role in proper nucleolar organization by limiting nucleolar size and regulating nucleolar number. Mechanistically, regulates the nucleolar levels of fibrillarin and nucleolin, two key players in pre-rRNA processing and ribosome assembly. The sequence is that of Nucleolar protein 12 (Nol12) from Rattus norvegicus (Rat).